Reading from the N-terminus, the 627-residue chain is Probable inactive L-type lectin-domain containing receptor kinase III.1 (627 aa).

Residues 1-23 (MITFKSIALTIIFLSYFVSCVSS) form the signal peptide. At 24–303 (QRETKFLNHG…STEKKSNNTM (280 aa)) the chain is on the extracellular side. Residues 26-262 (ETKFLNHGFL…SHFVLGWSFN (237 aa)) form a legume-lectin like region. 7 N-linked (GlcNAc...) asparagine glycosylation sites follow: Asn57, Asn78, Asn127, Asn184, Asn202, Asn209, and Asn230. The interval 272–297 (ITKLPSLPDPPPTLSPSPSPPVSTEK) is disordered. Residues 278–292 (LPDPPPTLSPSPSPP) are compositionally biased toward pro residues. Asn300 is a glycosylation site (N-linked (GlcNAc...) asparagine). A helical transmembrane segment spans residues 304 to 324 (LIIIVAASATVALMILIFSGF). Residues 325-627 (WFLRRDKIFF…PHDDYLFYGV (303 aa)) are Cytoplasmic-facing. Positions 353–623 (FDNSKLLGER…TEALPHDDYL (271 aa)) constitute a Protein kinase domain. Residues 359–367 (LGERNSGSF) and Lys381 each bind ATP.

It in the C-terminal section; belongs to the protein kinase superfamily. Ser/Thr protein kinase family. In the N-terminal section; belongs to the leguminous lectin family.

It is found in the cell membrane. The protein is Probable inactive L-type lectin-domain containing receptor kinase III.1 (LECRK31) of Arabidopsis thaliana (Mouse-ear cress).